The primary structure comprises 248 residues: MAGHSQFKNIMHRKGRQDAQRSKLFSKLAREITVAAKLGTPDPAMNPRLRAAVLAARAENMPKDNIERAIKKAIGGDSENYDEIRYEGYGPGGVAVIVEALTDNRNRAASDIRSFFTKSGGNLGETGSVSFMFDRTGIIEYDADKASADDMLDAAIEAGADDVVSSEAGHEIYASQETFRDVAKALEAKFGEARKAAVIWKPQNTVAVDDETGEKLFKLMDALNDHDDVQNVYANFEVSDALMAKMAG.

The segment at 1–21 is disordered; the sequence is MAGHSQFKNIMHRKGRQDAQR.

The protein belongs to the TACO1 family.

It localises to the cytoplasm. In Rhodopseudomonas palustris (strain ATCC BAA-98 / CGA009), this protein is Probable transcriptional regulatory protein RPA1097.